Consider the following 192-residue polypeptide: Probable thymidylate kinase (192 aa).

7 to 14 (GIDGAGKS) provides a ligand contact to ATP.

It belongs to the thymidylate kinase family.

The catalysed reaction is dTMP + ATP = dTDP + ADP. This Methanobrevibacter smithii (strain ATCC 35061 / DSM 861 / OCM 144 / PS) protein is Probable thymidylate kinase.